We begin with the raw amino-acid sequence, 367 residues long: Flagellar P-ring protein (367 aa).

The signal sequence occupies residues 1–22; it reads MRRMLVIRWILAIHLIATQVFA.

This sequence belongs to the FlgI family. The basal body constitutes a major portion of the flagellar organelle and consists of four rings (L,P,S, and M) mounted on a central rod.

The protein localises to the periplasm. Its subcellular location is the bacterial flagellum basal body. Functionally, assembles around the rod to form the L-ring and probably protects the motor/basal body from shearing forces during rotation. The polypeptide is Flagellar P-ring protein (Legionella pneumophila (strain Corby)).